Here is a 246-residue protein sequence, read N- to C-terminus: RNA polymerase sigma-B factor (246 aa).

The Polymerase core binding signature appears at 25–38; that stretch reads DLIQEGNIGLMKAV. The segment at residues 201-220 is a DNA-binding region (H-T-H motif); the sequence is LKELGEHFGFSRERARQLEI.

The protein belongs to the sigma-70 factor family.

Functionally, sigma factors are initiation factors that promote the attachment of RNA polymerase to specific initiation sites and are then released. This sigma factor is essential for late-stage differentiation of M.xanthus. This chain is RNA polymerase sigma-B factor (sigB), found in Myxococcus xanthus.